The following is a 354-amino-acid chain: Biotin synthase (354 aa).

A Radical SAM core domain is found at Asn-41–Ser-265. Cys-56, Cys-60, and Cys-63 together coordinate [4Fe-4S] cluster. [2Fe-2S] cluster contacts are provided by Cys-100, Cys-131, Cys-191, and Arg-263.

The protein belongs to the radical SAM superfamily. Biotin synthase family. Homodimer. [4Fe-4S] cluster serves as cofactor. Requires [2Fe-2S] cluster as cofactor.

The enzyme catalyses (4R,5S)-dethiobiotin + (sulfur carrier)-SH + 2 reduced [2Fe-2S]-[ferredoxin] + 2 S-adenosyl-L-methionine = (sulfur carrier)-H + biotin + 2 5'-deoxyadenosine + 2 L-methionine + 2 oxidized [2Fe-2S]-[ferredoxin]. Its pathway is cofactor biosynthesis; biotin biosynthesis; biotin from 7,8-diaminononanoate: step 2/2. Functionally, catalyzes the conversion of dethiobiotin (DTB) to biotin by the insertion of a sulfur atom into dethiobiotin via a radical-based mechanism. The protein is Biotin synthase of Shewanella woodyi (strain ATCC 51908 / MS32).